The following is a 713-amino-acid chain: Undecaprenyl-diphosphooligosaccharide--protein glycotransferase (713 aa).

The Cytoplasmic segment spans residues 1-11 (MLKKEYLKNPY). A helical membrane pass occupies residues 12–35 (LVLFAMIVLAYVFSVFCRFYWVWW). Residues 36–96 (ASEFNEYFFN…YWLYKITPFS (61 aa)) lie on the Periplasmic side of the membrane. Positions 52–54 (SND) match the DXD motif 1 motif. Asp-54 contacts Mn(2+). A helical transmembrane segment spans residues 97-122 (FESIILYMSTFLSSLVVIPIILLANE). The Cytoplasmic segment spans residues 123–125 (YKR). A helical transmembrane segment spans residues 126–144 (PLMGFVAALLASVANSYYN). The Periplasmic segment spans residues 145–152 (RTMSGYYD). Position 152 (Asp-152) interacts with Mn(2+). The DXD motif 2 motif lies at 152-154 (DTD). Residues 153 to 174 (TDMLVIVLPMFILFFMVRMILK) form a helical membrane-spanning segment. Residues 175-176 (KD) lie on the Cytoplasmic side of the membrane. The helical transmembrane segment at 177 to 192 (FFSLIALPLFIGIYLW) threads the bilayer. The Periplasmic segment spans residues 193–197 (WYPSS). 194–196 (YPS) contributes to the [alpha-D-GalNAc-(1-&gt;4)]2-[beta-D-Glc-(1-&gt;3)]-[alpha-D-GalNAc-(1-&gt;4)]2-alpha-D-GalNAc-(1-&gt;3)-alpha-D-diNAcBac-tri-trans,hepta-cis-undecaprenyl diphosphate binding site. A helical transmembrane segment spans residues 198 to 215 (YTLNVALIGLFLIYTLIF). The Cytoplasmic portion of the chain corresponds to 216–220 (HRKEK). The helical transmembrane segment at 221 to 233 (IFYIAVILSSLTL) threads the bilayer. Residues 234 to 237 (SNIA) are Periplasmic-facing. A helical membrane pass occupies residues 238 to 254 (WFYQSAIIVILFALFAL). Topologically, residues 255 to 260 (EQKRLN) are cytoplasmic. The helical transmembrane segment at 261-278 (FMIIGILGSATLIFLILS) threads the bilayer. The Periplasmic portion of the chain corresponds to 279 to 324 (GGVDPILYQLKFYIFRSDESANLTQGFMYFNVNQTIQEVENVDFSE). Residue Tyr-291 participates in [alpha-D-GalNAc-(1-&gt;4)]2-[beta-D-Glc-(1-&gt;3)]-[alpha-D-GalNAc-(1-&gt;4)]2-alpha-D-GalNAc-(1-&gt;3)-alpha-D-diNAcBac-tri-trans,hepta-cis-undecaprenyl diphosphate binding. Residues 313–316 (TIQE) carry the TIXE motif motif. Glu-316 contributes to the Mn(2+) binding site. Residues 325-347 (FMRRISGSEIVFLFSLFGFVWLL) form a helical membrane-spanning segment. The Cytoplasmic portion of the chain corresponds to 348–352 (RKHKS). Residues 353–369 (MIMALPILVLGFLALKG) form a helical membrane-spanning segment. Over 370–373 (GLRF) the chain is Periplasmic. Arg-372 lines the [alpha-D-GalNAc-(1-&gt;4)]2-[beta-D-Glc-(1-&gt;3)]-[alpha-D-GalNAc-(1-&gt;4)]2-alpha-D-GalNAc-(1-&gt;3)-alpha-D-diNAcBac-tri-trans,hepta-cis-undecaprenyl diphosphate pocket. A helical transmembrane segment spans residues 374 to 396 (TIYSVPVMALGFGFLLSEFKAIL). Over 397–406 (VKKYSQLTSN) the chain is Cytoplasmic. A helical membrane pass occupies residues 407–427 (VCIVFATILTLAPVFIHIYNY). Topologically, residues 428–713 (KAPTVFSQNE…RDAKVFKLKI (286 aa)) are periplasmic. The tract at residues 457-459 (WWD) is interacts with target acceptor peptide in protein substrate. A WWDYG motif motif is present at residues 457-461 (WWDYG). Position 462 (Tyr-462) interacts with [alpha-D-GalNAc-(1-&gt;4)]2-[beta-D-Glc-(1-&gt;3)]-[alpha-D-GalNAc-(1-&gt;4)]2-alpha-D-GalNAc-(1-&gt;3)-alpha-D-diNAcBac-tri-trans,hepta-cis-undecaprenyl diphosphate. Residue Asn-534 is glycosylated (N-linked (DATDGlc) asparagine). An MI motif motif is present at residues 568-575 (MSLIFSTV).

The protein belongs to the STT3 family. The cofactor is Mg(2+). Requires Mn(2+) as cofactor.

The protein resides in the cell inner membrane. The catalysed reaction is tritrans,heptacis-undecaprenyl diphosphooligosaccharide + [protein]-L-asparagine = tritrans,heptacis-undecaprenyl diphosphate + a glycoprotein with the oligosaccharide chain attached by N-beta-D-glycosyl linkage to protein L-asparagine.. It functions in the pathway protein modification; protein glycosylation. Its function is as follows. Oligosaccharyl transferase (OST) that catalyzes the initial transfer of a defined glycan (GalNAc(2)GlcGalNAc(3)Bac(NAc)(2) in eubacteria, where Bac(NAc)(2) is di-N-acetyl bacillosamine) from the lipid carrier undecaprenol-pyrophosphate to an asparagine residue within an Asp/Glu-Asn-X-Ser/Thr consensus motif in nascent polypeptide chains, the first step in protein N-glycosylation. In Campylobacter jejuni subsp. jejuni serotype O:2 (strain ATCC 700819 / NCTC 11168), this protein is Undecaprenyl-diphosphooligosaccharide--protein glycotransferase (pglB).